Here is a 344-residue protein sequence, read N- to C-terminus: Interactor of constitutive active ROPs 1 (344 aa).

4 disordered regions span residues 1-74 (MPRP…ESQL), 92-139 (EAVK…KETD), 186-218 (HESL…DEMV), and 307-344 (FMDP…KGQK). Residues 19–29 (SSSSTSDSNHS) are compositionally biased toward low complexity. Positions 60–108 (QKKLGGRISDLESQLGQAQEELRLLKEQLANAEAVKKQAQDELHKKSKK) form a coiled coil. Composition is skewed to basic and acidic residues over residues 93-103 (AVKKQAQDELH), 114-139 (RVEE…KETD), and 186-195 (HESLGKENES). Residues 145–273 (VEKIAVEEEE…EQWRKAADAA (129 aa)) are a coiled coil. Residues 196-211 (LKNQLSDSASEISNVK) show a composition bias toward polar residues.

This sequence belongs to the ICR family. Homooligomer. Interacts with ARAC3, ARAC4, ARAC8, ARAC11 and SEC3A, but not with ICR2 or EXO70A1. In terms of tissue distribution, expressed in mature and germinating pollen. Expressed throughout the embryo but not in the hypophysis and quiescent center (QC). In roots, absent from the QC and the stem cells.

It is found in the cell membrane. Its subcellular location is the nucleus. In terms of biological role, acts as a scaffold, mediating interaction of ROPs with different proteins. Required for primary and adventitious root maintenance, but not for their formation. Promotes the stabilization of ARAC11 on the plasma membrane of the pollen tube initiation site but not the activation of ARAC11. Regulates directionality of polar auxin transport, and is required for the formation of a stable auxin maximum and tip localized auxin gradient during embryogenesis, organogenesis, and meristem activity. Involved in exocytosis and in the recycling of PIN proteins back to the plasma membrane. This chain is Interactor of constitutive active ROPs 1 (ICR1), found in Arabidopsis thaliana (Mouse-ear cress).